The following is a 117-amino-acid chain: Large ribosomal subunit protein bL19 (117 aa).

The protein belongs to the bacterial ribosomal protein bL19 family.

In terms of biological role, this protein is located at the 30S-50S ribosomal subunit interface and may play a role in the structure and function of the aminoacyl-tRNA binding site. This is Large ribosomal subunit protein bL19 from Shewanella pealeana (strain ATCC 700345 / ANG-SQ1).